The following is a 70-amino-acid chain: Small ribosomal subunit protein bS21 (70 aa).

Belongs to the bacterial ribosomal protein bS21 family.

In Laribacter hongkongensis (strain HLHK9), this protein is Small ribosomal subunit protein bS21.